The following is a 322-amino-acid chain: MDGEELTEQETALYDRQIRVWGANAQRRLTKAHILVSGIKGTVAEFCKNIVLAGVGSVTLMDDRLANMEALNANFLIPPDENVYSGKTVAEICSDSLKDFNPMVRVSVEKGDLSMLGTDFFEQFDVVVIGYGSRATKKYVNEKCRKLKKRVAFYTVDCRDSCGEIFVDLQDYKYTKKKLEEMVECELNFPSFQEAISVPWKPIPRRTAKLYFAMRVIEVFEESEGRKHGECSLLDLARVLEIKKQLCEANSVSESHIPDILLERLITGTTEFPPVCAIVGGILAQEVIKAVSGKGDPLKNFFYYDGEDGKGVMEDISDSFTS.

The residue at position 1 (methionine 1) is an N-acetylmethionine.

The protein belongs to the ubiquitin-activating E1 family. In terms of assembly, heterodimer of SAE1A or SAE1B and SAE2. The complex binds SUMO proteins via SAE2.

The protein resides in the nucleus. It functions in the pathway protein modification; protein sumoylation. Functionally, the dimeric enzyme acts as an E1 ligase for SUMO1 and SUMO2. It mediates ATP-dependent activation of SUMO proteins and formation of a thioester with a conserved cysteine residue on SAE2. Functionally redundant with its paralog SAE1B. The polypeptide is SUMO-activating enzyme subunit 1A (SAE1A) (Arabidopsis thaliana (Mouse-ear cress)).